The sequence spans 269 residues: Tryptophan synthase alpha chain (269 aa).

Residues glutamate 56 and aspartate 67 each act as proton acceptor in the active site.

It belongs to the TrpA family. As to quaternary structure, tetramer of two alpha and two beta chains.

The catalysed reaction is (1S,2R)-1-C-(indol-3-yl)glycerol 3-phosphate + L-serine = D-glyceraldehyde 3-phosphate + L-tryptophan + H2O. It participates in amino-acid biosynthesis; L-tryptophan biosynthesis; L-tryptophan from chorismate: step 5/5. The alpha subunit is responsible for the aldol cleavage of indoleglycerol phosphate to indole and glyceraldehyde 3-phosphate. The sequence is that of Tryptophan synthase alpha chain from Mycobacterium marinum (strain ATCC BAA-535 / M).